The following is a 220-amino-acid chain: Cytidylate kinase (220 aa).

Residue 9–17 (GPAASGKST) participates in ATP binding.

It belongs to the cytidylate kinase family. Type 1 subfamily.

It localises to the cytoplasm. It carries out the reaction CMP + ATP = CDP + ADP. The enzyme catalyses dCMP + ATP = dCDP + ADP. The chain is Cytidylate kinase from Thermotoga maritima (strain ATCC 43589 / DSM 3109 / JCM 10099 / NBRC 100826 / MSB8).